The chain runs to 882 residues: Bifunctional heparan sulfate N-deacetylase/N-sulfotransferase 1 (882 aa).

Residues 1–17 lie on the Cytoplasmic side of the membrane; the sequence is MPALACLRRLCRHLSPQ. The sufficient for localization to Golgi membrane stretch occupies residues 1–169; sequence MPALACLRRL…VAYGVGIIGF (169 aa). The chain crosses the membrane as a helical; Signal-anchor for type II membrane protein span at residues 18-38; sequence AVLFLLFVFCLFSVFVSAYYL. Residues 39–882 lie on the Lumenal side of the membrane; sequence YGWNRGLEPS…WLREDLQNTR (844 aa). The interval 40-598 is heparan sulfate N-deacetylase 1; it reads GWNRGLEPSA…KRHKDIWSKE (559 aa). Residues N231, N351, and N401 are each glycosylated (N-linked (GlcNAc...) asparagine). The tract at residues 599–882 is heparan sulfate N-sulfotransferase 1; sequence KTCDRFPKLL…WLREDLQNTR (284 aa). The active-site For sulfotransferase activity is the K614. 614-618 is an adenosine 3',5'-bisphosphate binding site; the sequence is KTGTT. Residue N667 is glycosylated (N-linked (GlcNAc...) asparagine). Adenosine 3',5'-bisphosphate-binding residues include S712 and W817. C818 and C828 are joined by a disulfide. Residue 833-837 coordinates adenosine 3',5'-bisphosphate; that stretch reads KGRKY.

Belongs to the sulfotransferase 1 family. NDST subfamily. As to quaternary structure, monomer. Interacts with heparan sulfate co-polymerase subunits EXT1 and EXT2. As to expression, widely expressed in adult and throughout development.

It localises to the golgi apparatus membrane. The protein resides in the golgi apparatus. It is found in the trans-Golgi network membrane. Its subcellular location is the cis-Golgi network membrane. It carries out the reaction N-acetyl-alpha-D-glucosaminyl-[heparan sulfate](n) + H2O = alpha-D-glucosaminyl-[heparan sulfate](n) + acetate. The enzyme catalyses alpha-D-glucosaminyl-[heparan sulfate](n) + 3'-phosphoadenylyl sulfate = N-sulfo-alpha-D-glucosaminyl-[heparan sulfate](n) + adenosine 3',5'-bisphosphate + 2 H(+). Its pathway is glycan metabolism; heparan sulfate biosynthesis. It participates in glycan metabolism; heparin biosynthesis. With respect to regulation, inhibited by long N-sulfated sequences (more than 6 sugar residues) accumulating in its substrates heparan sulfate, and heparin. In terms of biological role, essential bifunctional enzyme that catalyzes both the N-deacetylation and the N-sulfation of glucosamine (GlcNAc) of the glycosaminoglycan in heparan sulfate. Modifies the GlcNAc-GlcA disaccharide repeating sugar backbone to make N-sulfated heparosan, a prerequisite substrate for later modifications in heparin biosynthesis. Plays a role in determining the extent and pattern of sulfation of heparan sulfate. Participates in biosynthesis of heparan sulfate that can ultimately serve as L-selectin ligands, thereby playing a role in inflammatory response. Required for the exosomal release of SDCBP, CD63 and syndecan. The protein is Bifunctional heparan sulfate N-deacetylase/N-sulfotransferase 1 of Mus musculus (Mouse).